An 83-amino-acid chain; its full sequence is UPF0298 protein SERP0712 (83 aa).

The protein belongs to the UPF0298 family.

The protein resides in the cytoplasm. The protein is UPF0298 protein SERP0712 of Staphylococcus epidermidis (strain ATCC 35984 / DSM 28319 / BCRC 17069 / CCUG 31568 / BM 3577 / RP62A).